We begin with the raw amino-acid sequence, 421 residues long: Probable sugar-binding periplasmic protein (421 aa).

A signal peptide spans 1 to 27; it reads MHKLLKLAAMGTAACALLAGMAPVANA.

The protein belongs to the bacterial solute-binding protein 1 family.

Its subcellular location is the periplasm. Functionally, part of a binding-protein-dependent transport system for a sugar. The polypeptide is Probable sugar-binding periplasmic protein (Brucella melitensis biotype 1 (strain ATCC 23456 / CCUG 17765 / NCTC 10094 / 16M)).